The following is a 42-amino-acid chain: Cytochrome b559 subunit beta (42 aa).

Residues 17–33 (WLSIHALAVPTVFFLGA) form a helical membrane-spanning segment. A heme-binding site is contributed by His21.

This sequence belongs to the PsbE/PsbF family. In terms of assembly, heterodimer of an alpha subunit and a beta subunit. PSII is composed of 1 copy each of membrane proteins PsbA, PsbB, PsbC, PsbD, PsbE, PsbF, PsbH, PsbI, PsbJ, PsbK, PsbL, PsbM, PsbT, PsbX, PsbY, PsbZ, Psb30/Ycf12, at least 3 peripheral proteins of the oxygen-evolving complex and a large number of cofactors. It forms dimeric complexes. The cofactor is heme b.

The protein resides in the plastid. It localises to the chloroplast thylakoid membrane. This b-type cytochrome is tightly associated with the reaction center of photosystem II (PSII). PSII is a light-driven water:plastoquinone oxidoreductase that uses light energy to abstract electrons from H(2)O, generating O(2) and a proton gradient subsequently used for ATP formation. It consists of a core antenna complex that captures photons, and an electron transfer chain that converts photonic excitation into a charge separation. The polypeptide is Cytochrome b559 subunit beta (Tupiella akineta (Green alga)).